Here is a 101-residue protein sequence, read N- to C-terminus: MIPGEILTDDGEHELNAGRATITLVVANTGDRPVQVGSHYHFYEVNDALAFDREAARGFRLNIAAGTAVRFEPGQTRTVELVALAGDRVVYGFQGKVMGPL.

This sequence belongs to the urease beta subunit family. In terms of assembly, heterotrimer of UreA (gamma), UreB (beta) and UreC (alpha) subunits. Three heterotrimers associate to form the active enzyme.

It localises to the cytoplasm. It catalyses the reaction urea + 2 H2O + H(+) = hydrogencarbonate + 2 NH4(+). The protein operates within nitrogen metabolism; urea degradation; CO(2) and NH(3) from urea (urease route): step 1/1. This is Urease subunit beta from Burkholderia multivorans (strain ATCC 17616 / 249).